Reading from the N-terminus, the 199-residue chain is NADH-quinone oxidoreductase subunit C (199 aa).

This sequence belongs to the complex I 30 kDa subunit family. In terms of assembly, NDH-1 is composed of 14 different subunits. Subunits NuoB, C, D, E, F, and G constitute the peripheral sector of the complex.

It is found in the cell inner membrane. It catalyses the reaction a quinone + NADH + 5 H(+)(in) = a quinol + NAD(+) + 4 H(+)(out). NDH-1 shuttles electrons from NADH, via FMN and iron-sulfur (Fe-S) centers, to quinones in the respiratory chain. The immediate electron acceptor for the enzyme in this species is believed to be ubiquinone. Couples the redox reaction to proton translocation (for every two electrons transferred, four hydrogen ions are translocated across the cytoplasmic membrane), and thus conserves the redox energy in a proton gradient. This Polynucleobacter necessarius subsp. necessarius (strain STIR1) protein is NADH-quinone oxidoreductase subunit C.